Consider the following 256-residue polypeptide: Dioxygenase lolE1 (256 aa).

The Fe cation site is built by His125, Asp127, and His203.

The protein belongs to the PhyH family. Homodimer. Fe cation serves as cofactor.

It functions in the pathway alkaloid biosynthesis. Its function is as follows. Dioxygenase; part of the gene cluster that mediates the biosynthesis of loline alkaloids, potent insecticidal agents composed of a pyrrolizidine ring system and an uncommon ether bridge linking carbons 2 and 7. Lolines are structurally differentiated by the various modifications of the L-amino group and include norloline, loline, N-methylloline, N-acetylloline, N-acetylnorloline, and N-formylloline. The first committed step is the condensation of O-acetyl-L-homoserine (derived from L-aspartic acid) and L-proline, probably catalyzed by the gamma-type pyridoxal 5'-phosphate(PLP)-dependent enzyme lolC, to give the diamino diacid, NACPP. Ensuing cyclization, decarboxylation, and acetylation steps yield 1-exo-acetamidopyrrolizidine (AcAP). LolO is required for installation of the ether bridge upon the pathway intermediate, 1-exo-acetamidopyrrolizidine (AcAP). In sequential 2-oxoglutarate- and O(2)-consuming steps, lolO removes hydrogens from C2 and C7 of AcAP to form both carbon-oxygen bonds in N-acetylnorloline (NANL), the precursor to all other lolines. The enzymes lolD, lolE, lolF and lolT have also been proposed to be involved in the ether-bridge installation. Further processing of the exocyclic moiety of NANL by fungal N-acetamidase (LolN), methyltransferase (LolM), and cytochrome P450 (LolP) enzymes, with occasional involvement of a plant acetyltransferase, generates the other known lolines. LolN transforms NANL to norlonine which is monomethylated and dimethylated to respectively lonine and N-methyllonine (NML) by lolM. LolP catalyzes hydroxylation of the methyl group in N-methylloline (NML) and further oxygenation to N-formylloline (NFL). A plant acetyltransferase is responsible for the acetylation of loline to form N-acetylloline (NAL). LolA might interact with aspartate kinase to prevent feedback inhibition of its activity by these end products and thereby promote production of L-homoserine from L-aspartate. In Epichloe uncinata (Endophyte fungus), this protein is Dioxygenase lolE1.